The chain runs to 185 residues: Ribosome-recycling factor (185 aa).

This sequence belongs to the RRF family.

It is found in the cytoplasm. In terms of biological role, responsible for the release of ribosomes from messenger RNA at the termination of protein biosynthesis. May increase the efficiency of translation by recycling ribosomes from one round of translation to another. The protein is Ribosome-recycling factor of Methylococcus capsulatus (strain ATCC 33009 / NCIMB 11132 / Bath).